The primary structure comprises 987 residues: ATP-dependent 6-phosphofructokinase subunit alpha (987 aa).

An N-terminal catalytic PFK domain 1 region spans residues M1–I602. ATP contacts are provided by residues G237, R300–C301, and G330–S333. D331 is a Mg(2+) binding site. Residues S376–D378, R413, M420–R422, E477, R504, and H510–R513 each bind beta-D-fructose 6-phosphate. D378 acts as the Proton acceptor in catalysis. Residues Y603–L616 form an interdomain linker region. Residues N617–Y987 are C-terminal regulatory PFK domain 2. Residues R686, T743–N747, R781, Q788–G790, E848, R874, H880–Q883, and R958 contribute to the beta-D-fructose 2,6-bisphosphate site.

Belongs to the phosphofructokinase type A (PFKA) family. ATP-dependent PFK group I subfamily. Eukaryotic two domain clade 'E' sub-subfamily. Heterooctamer of 4 alpha and 4 beta chains. The cofactor is Mg(2+).

The protein localises to the cytoplasm. It carries out the reaction beta-D-fructose 6-phosphate + ATP = beta-D-fructose 1,6-bisphosphate + ADP + H(+). It participates in carbohydrate degradation; glycolysis; D-glyceraldehyde 3-phosphate and glycerone phosphate from D-glucose: step 3/4. Allosterically activated by ADP, AMP, or fructose 2,6-bisphosphate, and allosterically inhibited by ATP or citrate. Catalyzes the phosphorylation of D-fructose 6-phosphate to fructose 1,6-bisphosphate by ATP, the first committing step of glycolysis. The chain is ATP-dependent 6-phosphofructokinase subunit alpha (PFK1) from Candida albicans (Yeast).